The primary structure comprises 85 residues: uncharacterized protein (85 aa).

Positions 35–85 are disordered; the sequence is SDKDAPFSTQALTRSKSKRKRSALPVANGLKKPTRSIKRPSRGERLSATTI.

This is an uncharacterized protein from Pasteurella multocida (strain Pm70).